Consider the following 1500-residue polypeptide: Carbamoyl-phosphate synthase [ammonia], mitochondrial (1500 aa).

Residues 1 to 38 (MTRILTACKVVKTLKSGFGFANVTTKRQWDFSRPGIRL) constitute a mitochondrion transit peptide. Positions 39–218 (LSVKAKTAHI…VKVFGKGNPT (180 aa)) are anthranilate phosphoribosyltransferase homolog. An N6-acetyllysine; alternate mark is found at Lys-44, Lys-55, Lys-57, and Lys-119. N6-succinyllysine; alternate is present on residues Lys-44, Lys-55, Lys-57, and Lys-119. Residue Lys-55 is modified to N6-glutaryllysine; alternate. At Ser-148 the chain carries Phosphoserine. N6-acetyllysine; alternate is present on residues Lys-157 and Lys-171. At Lys-157 the chain carries N6-succinyllysine; alternate. Lys-171 is subject to N6-glutaryllysine; alternate. N6-glutaryllysine is present on Lys-176. Lys-182 is modified (N6-acetyllysine). Ser-189 carries the post-translational modification Phosphoserine. An N6-acetyllysine modification is found at Lys-197. N6-acetyllysine; alternate is present on residues Lys-207, Lys-210, Lys-214, Lys-219, and Lys-228. Lys-207 is modified (N6-succinyllysine; alternate). Residues Lys-207, Lys-210, Lys-214, Lys-219, and Lys-228 each carry the N6-glutaryllysine; alternate modification. Lys-214 is modified (N6-succinyllysine; alternate). Positions 219 to 404 (KVVAVDCGIK…FSLIKKGKGT (186 aa)) constitute a Glutamine amidotransferase type-1 domain. An N6-glutaryllysine modification is found at Lys-237. The residue at position 279 (Lys-279) is an N6-acetyllysine. An N6-acetyllysine; alternate mark is found at Lys-280, Lys-287, Lys-307, and Lys-310. Lys-280 carries the post-translational modification N6-glutaryllysine; alternate. N6-succinyllysine; alternate is present on residues Lys-287 and Lys-307. N6-glutaryllysine; alternate occurs at positions 307 and 310. At Lys-400 the chain carries N6-succinyllysine. N6-succinyllysine; alternate occurs at positions 402 and 412. N6-glutaryllysine; alternate is present on residues Lys-402, Lys-412, Lys-453, and Lys-458. An N6-acetyllysine; alternate mark is found at Lys-412, Lys-453, Lys-458, Lys-522, Lys-527, and Lys-532. Lys-458, Lys-522, and Lys-527 each carry N6-succinyllysine; alternate. Residues Lys-527 and Lys-532 each carry the N6-glutaryllysine; alternate modification. A Phosphoserine; alternate modification is found at Ser-537. An O-linked (GlcNAc) serine; alternate glycan is attached at Ser-537. Ser-540 bears the Phosphoserine mark. The ATP-grasp 1 domain maps to 551–743 (SDKLNEINEK…LAFIAAKIAL (193 aa)). N6-acetyllysine; alternate is present on residues Lys-553 and Lys-560. N6-succinyllysine; alternate is present on residues Lys-553 and Lys-560. Lys-553 is modified (N6-glutaryllysine; alternate). Ser-569 is subject to Phosphoserine. Residues Lys-575, Lys-603, and Lys-612 each carry the N6-acetyllysine; alternate modification. An N6-succinyllysine; alternate mark is found at Lys-575, Lys-603, and Lys-612. Residue Lys-630 is modified to N6-acetyllysine. Lys-728 is subject to N6-glutaryllysine. Lys-751, Lys-757, Lys-772, Lys-793, Lys-811, Lys-831, Lys-840, Lys-841, Lys-856, Lys-875, Lys-889, and Lys-892 each carry N6-acetyllysine; alternate. N6-succinyllysine; alternate is present on residues Lys-751 and Lys-757. N6-glutaryllysine; alternate occurs at positions 757, 772, 793, and 811. Residue Lys-793 is modified to N6-succinyllysine; alternate. Residues Lys-831 and Lys-840 each carry the N6-succinyllysine; alternate modification. An N6-glutaryllysine; alternate mark is found at Lys-841, Lys-856, Lys-875, Lys-889, and Lys-892. N6-succinyllysine; alternate occurs at positions 875, 889, and 892. Phosphoserine is present on residues Ser-896 and Ser-898. 3 positions are modified to N6-acetyllysine; alternate: Lys-908, Lys-915, and Lys-919. Residues Lys-908, Lys-915, and Lys-919 each carry the N6-glutaryllysine; alternate modification. N6-succinyllysine; alternate occurs at positions 915 and 919. Residue Lys-935 is modified to N6-acetyllysine. Ser-1036 bears the Phosphoserine mark. Lys-1074 carries the post-translational modification N6-acetyllysine; alternate. N6-succinyllysine; alternate is present on Lys-1074. Position 1074 is an N6-glutaryllysine; alternate (Lys-1074). A phosphoserine mark is found at Ser-1079, Ser-1090, and Ser-1093. One can recognise an ATP-grasp 2 domain in the interval 1093 to 1284 (SAVLDELKVA…FIDVATKVMI (192 aa)). N6-acetyllysine; alternate is present on Lys-1100. Lys-1100 carries the post-translational modification N6-succinyllysine; alternate. An N6-succinyllysine modification is found at Lys-1149. 2 positions are modified to N6-acetyllysine; alternate: Lys-1168 and Lys-1183. An N6-succinyllysine; alternate mark is found at Lys-1168 and Lys-1183. Residues Lys-1168 and Lys-1183 each carry the N6-glutaryllysine; alternate modification. Ser-1203 carries the phosphoserine modification. Residue Lys-1222 is modified to N6-acetyllysine. Lys-1224 is subject to N6-glutaryllysine. N6-acetyllysine; alternate occurs at positions 1232, 1269, and 1291. Lys-1232, Lys-1269, and Lys-1291 each carry N6-succinyllysine; alternate. An O-linked (GlcNAc) serine glycan is attached at Ser-1331. Thr-1332 is a glycosylation site (O-linked (GlcNAc) threonine). Residues 1355–1500 (FKIPQKGILI…YRQYSAGKAA (146 aa)) form the MGS-like domain. Residue Lys-1356 is modified to N6-acetyllysine; alternate. 2 positions are modified to N6-succinyllysine; alternate: Lys-1356 and Lys-1360. Lys-1356 and Lys-1360 each carry N6-glutaryllysine; alternate. Residues Thr-1391, Thr-1394, and Trp-1410 each contribute to the N-acetyl-L-glutamate site. Phosphoserine is present on residues Ser-1419 and Ser-1431. 2 residues coordinate N-acetyl-L-glutamate: Asn-1437 and Asn-1440. Lys-1444 carries the post-translational modification N6-acetyllysine; alternate. Lys-1444 is modified (N6-succinyllysine; alternate). Asn-1449 serves as a coordination point for N-acetyl-L-glutamate. 3 positions are modified to N6-acetyllysine; alternate: Lys-1471, Lys-1479, and Lys-1486. 3 positions are modified to N6-succinyllysine; alternate: Lys-1471, Lys-1479, and Lys-1486. N6-glutaryllysine; alternate is present on residues Lys-1479 and Lys-1486.

As to quaternary structure, can form homooligomers (monomers as predominant form and dimers). In terms of assembly, (Microbial infection) Interacts with P.berghei (ANKA strain) phospholipid scramblase PLSCR; the interaction is involved in the interaction between parasite sporozoites and host hepatocytes. Undergoes proteolytic cleavage in the C-terminal region corresponding to the loss of approximately 12 AA residues from the C-terminus. Post-translationally, acetylation of Lys-287, Lys-603, Lys-841 and Lys-1291 is observed in liver mitochondria from fasted mice but not from fed mice. In terms of processing, succinylated at Lys-44, Lys-287 and Lys-1291. Desuccinylated at Lys-1291 by SIRT5, leading to activation. Glutarylated. Glutarylation levels increase during fasting. Deglutarylated by SIRT5 at Lys-55, Lys-219, Lys-412, Lys-889, Lys-892, Lys-915, Lys-1360 and Lys-1486, leading to activation. In terms of tissue distribution, expressed in hepatocytes (at protein level).

It localises to the mitochondrion. It is found in the nucleus. The protein resides in the nucleolus. Its subcellular location is the cell membrane. The enzyme catalyses hydrogencarbonate + NH4(+) + 2 ATP = carbamoyl phosphate + 2 ADP + phosphate + 2 H(+). Requires N-acetyl-L-glutamate (NAG) as an allosteric activator. In terms of biological role, involved in the urea cycle of ureotelic animals where the enzyme plays an important role in removing excess ammonia from the cell. In Mus musculus (Mouse), this protein is Carbamoyl-phosphate synthase [ammonia], mitochondrial (Cps1).